The sequence spans 202 residues: Dephospho-CoA kinase (202 aa).

Residues 5-202 enclose the DPCK domain; sequence VIGLTGGIGS…KKYLTLTKMV (198 aa). 13-18 provides a ligand contact to ATP; it reads GSGKTT.

This sequence belongs to the CoaE family.

The protein localises to the cytoplasm. It catalyses the reaction 3'-dephospho-CoA + ATP = ADP + CoA + H(+). The protein operates within cofactor biosynthesis; coenzyme A biosynthesis; CoA from (R)-pantothenate: step 5/5. Functionally, catalyzes the phosphorylation of the 3'-hydroxyl group of dephosphocoenzyme A to form coenzyme A. The polypeptide is Dephospho-CoA kinase (Colwellia psychrerythraea (strain 34H / ATCC BAA-681) (Vibrio psychroerythus)).